A 128-amino-acid polypeptide reads, in one-letter code: Probable 4-amino-4-deoxy-L-arabinose-phosphoundecaprenol flippase subunit ArnF (128 aa).

Residues 1-2 (MG) lie on the Cytoplasmic side of the membrane. The chain crosses the membrane as a helical span at residues 3 to 23 (LMWGLFSVIIASAAQLSLGFA). Topologically, residues 24–32 (ASHLPPMTH) are periplasmic. A helical membrane pass occupies residues 33–53 (LWDFIAALLAFGLDARILLLG). The Cytoplasmic portion of the chain corresponds to 54-76 (LQGYLLSVFCWYKTLHKLALSKA). The chain crosses the membrane as a helical span at residues 77 to 97 (YALLSMSYVLVWIASMVLPGW). The Periplasmic portion of the chain corresponds to 98-100 (EGT). The chain crosses the membrane as a helical span at residues 101 to 121 (FSLKALLGVACIMSGLMLIFL). Residues 122–128 (PTTKQRY) lie on the Cytoplasmic side of the membrane.

Belongs to the ArnF family. In terms of assembly, heterodimer of ArnE and ArnF.

It localises to the cell inner membrane. The protein operates within bacterial outer membrane biogenesis; lipopolysaccharide biosynthesis. Translocates 4-amino-4-deoxy-L-arabinose-phosphoundecaprenol (alpha-L-Ara4N-phosphoundecaprenol) from the cytoplasmic to the periplasmic side of the inner membrane. In Escherichia coli O7:K1 (strain IAI39 / ExPEC), this protein is Probable 4-amino-4-deoxy-L-arabinose-phosphoundecaprenol flippase subunit ArnF.